Here is a 73-residue protein sequence, read N- to C-terminus: uncharacterized protein (73 aa).

This is an uncharacterized protein from Schizosaccharomyces pombe (strain 972 / ATCC 24843) (Fission yeast).